Consider the following 801-residue polypeptide: Elongation factor G, mitochondrial (801 aa).

The transit peptide at 1-62 (MRTPTLARLP…LSKHFQQRRN (62 aa)) directs the protein to the mitochondrion. The 288-residue stretch at 99–386 (SRVRNIGIAA…GVIDYLPNPS (288 aa)) folds into the tr-type G domain. GTP-binding positions include 108–115 (AHIDSGKT), 184–188 (DTPGH), and 238–241 (NKMD).

This sequence belongs to the TRAFAC class translation factor GTPase superfamily. Classic translation factor GTPase family. EF-G/EF-2 subfamily.

The protein resides in the mitochondrion. It functions in the pathway protein biosynthesis; polypeptide chain elongation. Its function is as follows. Mitochondrial GTPase that catalyzes the GTP-dependent ribosomal translocation step during translation elongation. During this step, the ribosome changes from the pre-translocational (PRE) to the post-translocational (POST) state as the newly formed A-site-bound peptidyl-tRNA and P-site-bound deacylated tRNA move to the P and E sites, respectively. Catalyzes the coordinated movement of the two tRNA molecules, the mRNA and conformational changes in the ribosome. In Aspergillus niger (strain ATCC MYA-4892 / CBS 513.88 / FGSC A1513), this protein is Elongation factor G, mitochondrial (mef1).